Consider the following 212-residue polypeptide: uncharacterized protein (212 aa).

2 disordered regions span residues 1–25 (MARK…GRPN) and 165–212 (STSG…HWGG). Low complexity predominate over residues 202-212 (RSSSARGHWGG).

This is an uncharacterized protein from Escherichia coli (strain K12).